A 44-amino-acid chain; its full sequence is Photosystem I reaction center subunit IX (44 aa).

Residues 7–27 form a helical membrane-spanning segment; that stretch reads YLSVAPVASTLWFVALAGLLI.

Belongs to the PsaJ family.

Its subcellular location is the plastid. It is found in the chloroplast thylakoid membrane. In terms of biological role, may help in the organization of the PsaE and PsaF subunits. This Cicer arietinum (Chickpea) protein is Photosystem I reaction center subunit IX.